The chain runs to 133 residues: Small ribosomal subunit protein uS8 (133 aa).

The protein belongs to the universal ribosomal protein uS8 family. As to quaternary structure, part of the 30S ribosomal subunit. Contacts proteins S5 and S12.

Its function is as follows. One of the primary rRNA binding proteins, it binds directly to 16S rRNA central domain where it helps coordinate assembly of the platform of the 30S subunit. In Leptospira interrogans serogroup Icterohaemorrhagiae serovar copenhageni (strain Fiocruz L1-130), this protein is Small ribosomal subunit protein uS8.